The chain runs to 1049 residues: FERM, ARHGEF and pleckstrin domain-containing protein 1 (1049 aa).

The tract at residues 1–37 is disordered; sequence MGEIEQKPTPASRLGAPENSGISTLERGQKPPPTPSG. Phosphoserine occurs at positions 20 and 23. Thr24 bears the Phosphothreonine mark. An FERM domain is found at 40–320; that stretch reads MTVKIQMLDD…EHHAFFRLFE (281 aa). 7 positions are modified to phosphoserine: Ser340, Ser373, Ser389, Ser403, Ser427, Ser433, and Ser437. The disordered stretch occupies residues 361 to 537; that stretch reads FERKHSKIHS…TDDEEEGRRK (177 aa). 2 stretches are compositionally biased toward polar residues: residues 371 to 395 and 402 to 412; these read TRSL…SASL and ESPSAQSCQQA. Low complexity predominate over residues 435-448; the sequence is SGSKAADGTAAAAP. Composition is skewed to polar residues over residues 473–492 and 499–514; these read STGS…NSQG and VTLS…QASP. Phosphoserine is present on residues Ser513 and Ser517. The 192-residue stretch at 543–734 folds into the DH domain; it reads KAYYIAKEVS…TEMVAQLHGT (192 aa). The 98-residue stretch at 763 to 860 folds into the PH 1 domain; it reads EFIRLGSLSK…WLEDIQMAID (98 aa). Residues Ser837, Ser876, and Ser882 each carry the phosphoserine modification. The disordered stretch occupies residues 866 to 908; it reads NGPTPELLASSPPDNKSPDEATAADQESEDDLSASRTSLERQA. Residue Thr887 is modified to Phosphothreonine. Phosphoserine is present on residues Ser893, Ser900, and Ser903. A PH 2 domain is found at 936-1033; the sequence is ENQLSGNLLR…WMEVIRSATS (98 aa).

In terms of assembly, interacts with CADM1. Interacts with RAC1. As to expression, detected in forbrain (at protein level).

Its subcellular location is the cell membrane. It localises to the synapse. The protein localises to the synaptosome. The protein resides in the cytoplasm. It is found in the cytosol. Its subcellular location is the cell projection. It localises to the filopodium. The protein localises to the dendrite. The protein resides in the dendritic spine. Its function is as follows. May play a role in semaphorin signaling. Functions as a guanine nucleotide exchange factor for RAC1. Plays a role in the assembly and disassembly of dendritic filopodia, the formation of dendritic spines, regulation of dendrite length and ultimately the formation of synapses. The chain is FERM, ARHGEF and pleckstrin domain-containing protein 1 (Farp1) from Rattus norvegicus (Rat).